A 268-amino-acid chain; its full sequence is MRRFRLVGFLSSLVLAAGAALTGAATAQAAQPAAADGYVALGDSYSSGVGAGSYISSSGDCKRSTKAHPYLWAAAHSPSTFDFTACSGARTGDVLSGQLGPLSSGTGLVSISIGGNDAGFADTMTTCVLQSESSCLSRIATAEAYVDSTLPGKLDGVYSAISDKAPNAHVVVIGYPRFYKLGTTCIGLSETKRTAINKASDHLNTVLAQRAAAHGFTFGDVRTTFTGHELCSGSPWLHSVNWLNIGESYHPTAAGQSGGYLPVLNGAA.

Positions 1–29 (MRRFRLVGFLSSLVLAAGAALTGAATAQA) are cleaved as a signal peptide. Serine 44 functions as the Nucleophile in the catalytic mechanism. 3 cysteine pairs are disulfide-bonded: cysteine 61-cysteine 86, cysteine 127-cysteine 135, and cysteine 185-cysteine 231. Histidine 250 is an active-site residue.

Belongs to the 'GDSL' lipolytic enzyme family. Monomer.

The protein resides in the secreted. The enzyme catalyses a triacylglycerol + H2O = a diacylglycerol + a fatty acid + H(+). With respect to regulation, strongly inhibited by Ag(+). The cations Ca(2+), Mg(2+), Co(2+) and Cu(2+) do not significantly reduce the lipolytic activity of SCO1725. Is also inhibited by DTT in vitro, but not by EDTA or by the reagent masking SH-groups, p-hydroxymercuribenzoate (pHMB). Is resistant to PMSF inhibition, except in the presence of Ca(2+). Is also strongly inhibited by 3,4-dichloroisocoumarin (DCI), another inhibitor of serine hydrolases. Addition of tetrahydrofuran and 1,4-dioxane significantly increases (2- and 4- fold, respectively) hydrolytic activity of lipase towards p-nitrophenyl caprylate. Catalyzes the hydrolysis of fatty acid esters with a preference for mid-length acyl chain (C10-C16). Is able to hydrolyze the triacylglycerol triolein and mixed triacylglycerols from a wide range of natural oils; better activity is obtained with corn-, wheat germ- and olive oil that have higher content of linoleic and/or oleic acid (C18:2; C18:1, cis). Tween detergents are also substrates for this enzyme. Displays arylesterase activity towards p-nitrophenyl alkanoate esters and alpha- and beta-naphthyl esters. The sequence is that of Lipase 1 from Streptomyces coelicolor (strain ATCC BAA-471 / A3(2) / M145).